A 286-amino-acid polypeptide reads, in one-letter code: Probable endonuclease 4 (286 aa).

Residues His67, His107, Glu144, Asp178, His181, His215, Asp228, His230, and Glu260 each coordinate Zn(2+).

It belongs to the AP endonuclease 2 family. Zn(2+) serves as cofactor.

The catalysed reaction is Endonucleolytic cleavage to 5'-phosphooligonucleotide end-products.. In terms of biological role, endonuclease IV plays a role in DNA repair. It cleaves phosphodiester bonds at apurinic or apyrimidinic (AP) sites, generating a 3'-hydroxyl group and a 5'-terminal sugar phosphate. The sequence is that of Probable endonuclease 4 from Chloroflexus aggregans (strain MD-66 / DSM 9485).